The sequence spans 142 residues: Large ribosomal subunit protein uL11 (142 aa).

The protein belongs to the universal ribosomal protein uL11 family. As to quaternary structure, part of the ribosomal stalk of the 50S ribosomal subunit. Interacts with L10 and the large rRNA to form the base of the stalk. L10 forms an elongated spine to which L12 dimers bind in a sequential fashion forming a multimeric L10(L12)X complex. One or more lysine residues are methylated.

Functionally, forms part of the ribosomal stalk which helps the ribosome interact with GTP-bound translation factors. The chain is Large ribosomal subunit protein uL11 from Glaesserella parasuis serovar 5 (strain SH0165) (Haemophilus parasuis).